A 30-amino-acid chain; its full sequence is Cysteine-rich venom protein annuliferin-a (30 aa).

It belongs to the CRISP family. Contains 8 disulfide bonds. In terms of tissue distribution, expressed by the venom gland.

Its subcellular location is the secreted. Its function is as follows. Inhibits calcium-activated potassium channels (KCa), voltage-gated potassium channel (Kv), and the calcium release channel/ryanodine receptor (RyR). The polypeptide is Cysteine-rich venom protein annuliferin-a (Naja annulifera (Banded Egyptian cobra)).